The following is a 208-amino-acid chain: Fusaric acid resistance protein FusD (208 aa).

Residues 7–29 form a helical membrane-spanning segment; sequence LLLSMLVSAIAFAVLFPPTAPWL.

Its subcellular location is the cell membrane. Involved in the resistance (detoxification) of the fungal toxin fusaric acid. This Burkholderia cepacia (Pseudomonas cepacia) protein is Fusaric acid resistance protein FusD (fusD).